Reading from the N-terminus, the 25-residue chain is Acyl carrier protein (25 aa).

The region spanning 2-25 (ESIEQRVKKIVAEQLGVAEAEIKA) is the Carrier domain.

The protein belongs to the acyl carrier protein (ACP) family. Post-translationally, 4'-phosphopantetheine is transferred from CoA to a specific serine of apo-ACP by AcpS. This modification is essential for activity because fatty acids are bound in thioester linkage to the sulfhydryl of the prosthetic group.

It is found in the cytoplasm. It participates in lipid metabolism; fatty acid biosynthesis. Functionally, carrier of the growing fatty acid chain in fatty acid biosynthesis. The chain is Acyl carrier protein (acpP) from Alcaligenes faecalis.